The following is an 861-amino-acid chain: Linoleate 9S-lipoxygenase 2 (861 aa).

Positions 29 to 160 (NALDFTDLAG…RYKSDRIFFV (132 aa)) constitute a PLAT domain. The 699-residue stretch at 163–861 (PYLPSKTPEL…GKGIPNSVSI (699 aa)) folds into the Lipoxygenase domain. Residues 212 to 246 (EGKENVRTTLGGSAEYPYPRRGRTGRPPTRTDPKS) form a disordered region. Positions 522, 527, 713, 717, and 861 each coordinate Fe cation.

This sequence belongs to the lipoxygenase family. In terms of assembly, monomer. The cofactor is Fe cation. Highly expressed in tubers and roots. Detected in flower buds and leaves.

Its subcellular location is the cytoplasm. It catalyses the reaction (9Z,12Z)-octadecadienoate + O2 = (9S)-hydroperoxy-(10E,12Z)-octadecadienoate. The protein operates within lipid metabolism; oxylipin biosynthesis. Plant lipoxygenases may be involved in a number of diverse aspects of plant physiology including growth and development, pest resistance, and senescence or responses to wounding. Catalyzes the hydroperoxidation of lipids containing a cis,cis-1,4-pentadiene structure. Linoleic acid is the preferred substrate, but is also active with linolenic and arachidonic acids. This is Linoleate 9S-lipoxygenase 2 (LOX1.2) from Solanum tuberosum (Potato).